The following is a 107-amino-acid chain: MRTLMLIILSILIYLSSAKPVFGPIGVVEKHKIAKMLQNEQKSLQMLEEEQALLEKVVETLSNDIEEKEEKIEKLRRSYTNGNGALANIYEDYRSGFKSGIGARPGR.

A signal peptide spans Met1–Ala18.

This is an uncharacterized protein from Caenorhabditis elegans.